The sequence spans 135 residues: Putative nickel-responsive regulator (135 aa).

Ni(2+) is bound by residues H79, H90, H92, and C98.

Belongs to the transcriptional regulatory CopG/NikR family. Ni(2+) serves as cofactor.

Transcriptional regulator. This chain is Putative nickel-responsive regulator, found in Dictyoglomus turgidum (strain DSM 6724 / Z-1310).